The chain runs to 385 residues: Succinate--CoA ligase [ADP-forming] subunit beta (385 aa).

The 236-residue stretch at Lys9–Glu244 folds into the ATP-grasp domain. ATP is bound by residues Lys46, Gly53–Gly55, Glu99, Gln102, and Glu107. Residues Asn199 and Asp213 each coordinate Mg(2+). Residues Asn264 and Gly321–Leu323 contribute to the substrate site.

The protein belongs to the succinate/malate CoA ligase beta subunit family. In terms of assembly, heterotetramer of two alpha and two beta subunits. Mg(2+) is required as a cofactor.

The enzyme catalyses succinate + ATP + CoA = succinyl-CoA + ADP + phosphate. The catalysed reaction is GTP + succinate + CoA = succinyl-CoA + GDP + phosphate. The protein operates within carbohydrate metabolism; tricarboxylic acid cycle; succinate from succinyl-CoA (ligase route): step 1/1. Succinyl-CoA synthetase functions in the citric acid cycle (TCA), coupling the hydrolysis of succinyl-CoA to the synthesis of either ATP or GTP and thus represents the only step of substrate-level phosphorylation in the TCA. The beta subunit provides nucleotide specificity of the enzyme and binds the substrate succinate, while the binding sites for coenzyme A and phosphate are found in the alpha subunit. This chain is Succinate--CoA ligase [ADP-forming] subunit beta, found in Desulforapulum autotrophicum (strain ATCC 43914 / DSM 3382 / VKM B-1955 / HRM2) (Desulfobacterium autotrophicum).